The following is a 207-amino-acid chain: Cytochrome c biogenesis ATP-binding export protein CcmA (207 aa).

One can recognise an ABC transporter domain in the interval L4–A207. G36–T43 contacts ATP.

This sequence belongs to the ABC transporter superfamily. CcmA exporter (TC 3.A.1.107) family. As to quaternary structure, the complex is composed of two ATP-binding proteins (CcmA) and two transmembrane proteins (CcmB).

It is found in the cell inner membrane. The catalysed reaction is heme b(in) + ATP + H2O = heme b(out) + ADP + phosphate + H(+). Its function is as follows. Part of the ABC transporter complex CcmAB involved in the biogenesis of c-type cytochromes; once thought to export heme, this seems not to be the case, but its exact role is uncertain. Responsible for energy coupling to the transport system. In Shigella sonnei (strain Ss046), this protein is Cytochrome c biogenesis ATP-binding export protein CcmA.